The chain runs to 1732 residues: Serine/threonine-protein kinase MRCK alpha (1732 aa).

Positions 77–343 (FEILKVIGRG…IEDFKKHPFF (267 aa)) constitute a Protein kinase domain. Residues 83-91 (IGRGAFGEV) and K106 each bind ATP. Catalysis depends on D201, which acts as the Proton acceptor. 2 positions are modified to phosphoserine; by autocatalysis: S222 and S234. Phosphothreonine; by autocatalysis is present on T240. The AGC-kinase C-terminal domain maps to 344–414 (SGIDWDNIRN…TSSCVLSDRS (71 aa)). Coiled coils occupy residues 437–820 (NNLA…WEAQ) and 880–943 (LELQ…SEKG). Positions 968–1003 (ERSPSCTPASKGRRTVDSTPLSVHTPTLRKKGCPGS) are disordered. The segment at 1012 to 1062 (THQFFVKSFTTPTKCHQCTSLMVGLIRQGCSCEVCGFSCHITCVNKAPTTC) adopts a Phorbol-ester/DAG-type zinc-finger fold. Residues 1082–1201 (GTAYEGHVRI…WVGVLSELHK (120 aa)) enclose the PH domain. Position 1127 is a phosphoserine (S1127). One can recognise a CNH domain in the interval 1227-1499 (IKTTQAAAII…RPLNNEGSLN (273 aa)). S1545 is modified (phosphoserine). The 14-residue stretch at 1571–1584 (ISNPTNFNHIAHMG) folds into the CRIB domain. Residues 1591-1732 (ILKDLPMNPR…ESTDRGSWDP (142 aa)) are disordered. A compositionally biased stretch (polar residues) spans 1604–1619 (SRTVFSGSVSIPSITK). Phosphoserine occurs at positions 1611, 1613, 1629, 1651, 1664, 1669, and 1693. A compositionally biased stretch (low complexity) spans 1625 to 1640 (GRSMSASSGLSARSSA). The segment covering 1665–1674 (PSEGSLSSGG) has biased composition (low complexity). A compositionally biased stretch (low complexity) spans 1697–1707 (STASNSSNLSS). S1719 and S1721 each carry phosphoserine.

The protein belongs to the protein kinase superfamily. AGC Ser/Thr protein kinase family. DMPK subfamily. In terms of assembly, homodimer and homotetramer via the coiled coil regions. Interacts tightly with GTP-bound but not GDP-bound CDC42. Forms a tripartite complex with MYO18A and LURAP1 with the latter acting as an adapter connecting CDC42BPA and MYO18A. LURAP1 binding results in activation of CDC42BPA by abolition of its negative autoregulation. Interacts with LURAP1. Interacts (via AGC-kinase C-terminal domain) with FAM89B/LRAP25 (via LRR repeat). Forms a tripartite complex with FAM89B/LRAP25 and LIMK1. The cofactor is Mg(2+). Proteolytically cleaved by caspases upon apoptosis induction. The cleavage at Asp-478 by CASP3 increases its kinase activity (in vitro). In terms of tissue distribution, abundant in the heart, brain, skeletal muscle, kidney, and pancreas, with little or no expression in the lung and liver.

It localises to the cytoplasm. The protein localises to the cell projection. The protein resides in the lamellipodium. The catalysed reaction is L-seryl-[protein] + ATP = O-phospho-L-seryl-[protein] + ADP + H(+). It carries out the reaction L-threonyl-[protein] + ATP = O-phospho-L-threonyl-[protein] + ADP + H(+). Its activity is regulated as follows. Maintained in an inactive, closed conformation by an interaction between the kinase domain and the negative autoregulatory C-terminal coiled-coil region. Agonist binding to the phorbol ester binding site disrupts this, releasing the kinase domain to allow N-terminus-mediated dimerization and kinase activation by transautophosphorylation. Inhibited by chelerythrine chloride. Its function is as follows. Serine/threonine-protein kinase which is an important downstream effector of CDC42 and plays a role in the regulation of cytoskeleton reorganization and cell migration. Regulates actin cytoskeletal reorganization via phosphorylation of PPP1R12C and MYL9/MLC2. In concert with MYO18A and LURAP1, is involved in modulating lamellar actomyosin retrograde flow that is crucial to cell protrusion and migration. Phosphorylates: PPP1R12A, LIMK1 and LIMK2. May play a role in TFRC-mediated iron uptake. In concert with FAM89B/LRAP25 mediates the targeting of LIMK1 to the lamellipodium resulting in its activation and subsequent phosphorylation of CFL1 which is important for lamellipodial F-actin regulation. Triggers the formation of an extrusion apical actin ring required for epithelial extrusion of apoptotic cells. This is Serine/threonine-protein kinase MRCK alpha from Homo sapiens (Human).